The primary structure comprises 336 residues: Electron transfer flavoprotein subunit alpha (336 aa).

Residue 275-303 coordinates FAD; that stretch reads LYIACGISGAIQHLAGMQDSDYIIAINKD.

It belongs to the ETF alpha-subunit/FixB family. In terms of assembly, heterodimer of an alpha and a beta subunit. FAD serves as cofactor.

The electron transfer flavoprotein serves as a specific electron acceptor for other dehydrogenases. It transfers the electrons to the main respiratory chain via ETF-ubiquinone oxidoreductase (ETF dehydrogenase). This Clostridium acetobutylicum (strain ATCC 824 / DSM 792 / JCM 1419 / IAM 19013 / LMG 5710 / NBRC 13948 / NRRL B-527 / VKM B-1787 / 2291 / W) protein is Electron transfer flavoprotein subunit alpha (etfA).